The primary structure comprises 135 residues: Protein PsiE homolog (135 aa).

4 helical membrane-spanning segments follow: residues 13–33 (VLQW…VIFL), 54–74 (YMLV…ALIV), 82–102 (HFPL…LIIV), and 107–127 (PNDT…LYLA).

This sequence belongs to the PsiE family.

Its subcellular location is the cell inner membrane. The chain is Protein PsiE homolog from Edwardsiella ictaluri (strain 93-146).